The sequence spans 306 residues: Curved DNA-binding protein (306 aa).

In terms of domain architecture, J spans 5 to 69 (DYYAIMGVKP…QRRAEYDQLW (65 aa)).

The protein resides in the cytoplasm. It localises to the nucleoid. DNA-binding protein that preferentially recognizes a curved DNA sequence. It is probably a functional analog of DnaJ; displays overlapping activities with DnaJ, but functions under different conditions, probably acting as a molecular chaperone in an adaptive response to environmental stresses other than heat shock. Lacks autonomous chaperone activity; binds native substrates and targets them for recognition by DnaK. Its activity is inhibited by the binding of CbpM. The polypeptide is Curved DNA-binding protein (Salmonella paratyphi A (strain ATCC 9150 / SARB42)).